A 205-amino-acid polypeptide reads, in one-letter code: Large ribosomal subunit protein uL18 (205 aa).

The protein belongs to the universal ribosomal protein uL18 family. Part of the 50S ribosomal subunit. Contacts the 5S and 23S rRNAs.

This is one of the proteins that bind and probably mediate the attachment of the 5S RNA into the large ribosomal subunit, where it forms part of the central protuberance. The protein is Large ribosomal subunit protein uL18 of Haloquadratum walsbyi (strain DSM 16790 / HBSQ001).